The primary structure comprises 709 residues: Copper amine oxidase vicK1 (709 aa).

Positions 1 to 20 are cleaved as a signal peptide; sequence MKLFLLFTLTLVNIFSVSLQ. D365 (proton acceptor) is an active-site residue. Residues C383 and C408 are joined by a disulfide bond. Y448 (schiff-base intermediate with substrate; via topaquinone) is an active-site residue. Position 448 is a 2',4',5'-topaquinone (Y448). H496 and H498 together coordinate Cu cation. Ca(2+)-binding residues include D505, L506, D507, E548, F641, E645, D651, and L652. Residue H662 coordinates Cu cation.

This sequence belongs to the copper/topaquinone oxidase family. Homodimer; disulfide-linked. It depends on Cu cation as a cofactor. Ca(2+) is required as a cofactor. The cofactor is L-topaquinone. Topaquinone (TPQ) is generated by copper-dependent autoxidation of a specific tyrosyl residue.

Its pathway is mycotoxin biosynthesis. Functionally, copper amine oxidase, part of the gene cluster that mediates the biosynthesis of the secondary metabolite victorin, the molecular basis for Victoria blight of oats. Within the pathway, vicK1 catalyzes the oxidative deamination of the N-terminal glycyl moiety of the hexapeptides in order to produce the active glyoxylate form victorins. The pathway starts with the processing of the precursor vicA1 by several endopeptidases including kexin proteases as well as the cluster-specific S28 family peptidases vicPa and vicPb to produce 7 identical copies of the hexapeptide Gly-Leu-Lys-Leu-Ala-Phe. After being excised from the precursor peptide, the core peptides are cyclized and modified post-translationally by enzymes encoded within the gene cluster. The ustYa family oxidase vicYb is required for the formation of the macrocycle in victorin and the copper amine oxidases (CAOs) vicK1 and vicK2 are responsible for converting victorin to the active form by oxidizing the N-terminal glycyl residue in the peptides to glyoxylate. Relaxed substrate specificity of enzymes in the victorin biosynthetic pathway results in a metabolic grid that produces a set of analogs including victorinines B, C, E or HV-toxin M. The protein is Copper amine oxidase vicK1 of Bipolaris victoriae (strain FI3) (Victoria blight of oats agent).